We begin with the raw amino-acid sequence, 71 residues long: Beta-defensin 7 (71 aa).

The first 22 residues, 1 to 22 (MRIHYVLFAFLLVLLSPFAAFS), serve as a signal peptide directing secretion. Gln23 bears the Pyrrolidone carboxylic acid mark. A propeptide spanning residues 23 to 25 (QDI) is cleaved from the precursor. 3 disulfides stabilise this stretch: Cys31-Cys58, Cys38-Cys52, and Cys42-Cys59.

The protein belongs to the beta-defensin family. LAP/TAP subfamily.

It is found in the secreted. Its function is as follows. Has bactericidal activity. This Mus musculus (Mouse) protein is Beta-defensin 7 (Defb7).